Consider the following 495-residue polypeptide: Alpha-1B-glycoprotein (495 aa).

An N-terminal signal peptide occupies residues 1 to 21; it reads MSMLVVFLLLWGVTWGPVTEA. 5 Ig-like V-type domains span residues 22 to 113, 114 to 206, 207 to 299, 300 to 397, and 398 to 495; these read AIFY…LTGP, KSLP…ELAA, PPPP…PVEL, ILSD…LHVD, and GPPP…VAES. The N-linked (GlcNAc...) (complex) asparagine glycan is linked to Asn44. Disulfide bonds link Cys49-Cys93, Cys139-Cys182, Cys232-Cys279, Cys325-Cys374, and Cys423-Cys470. The N-linked (GlcNAc...) asparagine glycan is linked to Asn179. N-linked (GlcNAc...) asparagine glycosylation is found at Asn363 and Asn371.

In terms of assembly, interacts with CRISP3. In terms of tissue distribution, plasma.

The protein localises to the secreted. The protein is Alpha-1B-glycoprotein (A1BG) of Homo sapiens (Human).